The primary structure comprises 1383 residues: Insulin receptor (1383 aa).

The N-terminal stretch at methionine 1 to glycine 26 is a signal peptide. Extracellular-facing segments span residues histidine 27–serine 759 and serine 764–lysine 957. A disulfide bond links cysteine 34 and cysteine 52. Residues asparagine 42, asparagine 51, asparagine 104, and asparagine 137 are each glycosylated (N-linked (GlcNAc...) asparagine). 9 disulfides stabilise this stretch: cysteine 152–cysteine 181, cysteine 185–cysteine 208, cysteine 195–cysteine 214, cysteine 218–cysteine 227, cysteine 222–cysteine 233, cysteine 234–cysteine 242, cysteine 238–cysteine 251, cysteine 254–cysteine 263, and cysteine 267–cysteine 279. N-linked (GlcNAc...) asparagine glycosylation occurs at asparagine 241. N-linked (GlcNAc...) asparagine glycosylation occurs at asparagine 281. Cystine bridges form between cysteine 285-cysteine 310, cysteine 292-cysteine 300, cysteine 314-cysteine 327, cysteine 330-cysteine 334, and cysteine 338-cysteine 359. N-linked (GlcNAc...) asparagine glycosylation occurs at asparagine 321. Asparagine 363 is a glycosylation site (N-linked (GlcNAc...) asparagine). Position 399 is a phosphoserine (serine 399). A Phosphotyrosine modification is found at tyrosine 400. Serine 406 carries the post-translational modification Phosphoserine. 2 N-linked (GlcNAc...) asparagine glycosylation sites follow: asparagine 423 and asparagine 444. The cysteines at positions 461 and 494 are disulfide-linked. Asparagine 540, asparagine 634, asparagine 652, and asparagine 699 each carry an N-linked (GlcNAc...) asparagine glycan. Residues valine 625–serine 727 enclose the Fibronectin type-III 1 domain. Residues cysteine 675 and cysteine 900 are joined by a disulfide bond. Residues serine 687–glutamate 709 are disordered. The insulin-binding stretch occupies residues glutamate 734–phenylalanine 742. A disordered region spans residues threonine 747 to asparagine 783. Fibronectin type-III domains follow at residues glutamate 754 to glutamate 848 and isoleucine 854 to tyrosine 948. N-linked (GlcNAc...) asparagine glycans are attached at residues asparagine 770, asparagine 783, asparagine 921, and asparagine 934. Positions valine 771 to asparagine 783 are enriched in polar residues. The helical transmembrane segment at isoleucine 958–leucine 978 threads the bilayer. The Cytoplasmic portion of the chain corresponds to phenylalanine 979–serine 1383. The tract at residues asparagine 997–tyrosine 1000 is important for interaction with IRS1, SHC1 and STAT5B. Residue tyrosine 1000 is modified to Phosphotyrosine; by autocatalysis. The region spanning isoleucine 1024–phenylalanine 1299 is the Protein kinase domain. Residues serine 1034 and lysine 1058 each contribute to the ATP site. Residue lysine 1080 forms a Glycyl lysine isopeptide (Lys-Gly) (interchain with G-Cter in ubiquitin) linkage. S-nitrosocysteine is present on cysteine 1084. An ATP-binding site is contributed by glutamate 1105–aspartate 1111. Aspartate 1160 functions as the Proton donor/acceptor in the catalytic mechanism. Residues arginine 1164–asparagine 1165 and aspartate 1178 each bind ATP. A phosphotyrosine; by autocatalysis mark is found at tyrosine 1186, tyrosine 1190, tyrosine 1191, tyrosine 1356, and tyrosine 1362. Positions proline 1361 to serine 1383 are disordered. The tract at residues tyrosine 1362 to methionine 1365 is PIK3R1 binding.

The protein belongs to the protein kinase superfamily. Tyr protein kinase family. Insulin receptor subfamily. As to quaternary structure, tetramer of 2 alpha and 2 beta chains linked by disulfide bonds. The alpha chains carry the insulin-binding regions, while the beta chains carry the kinase domain. Forms a hybrid receptor with IGF1R, the hybrid is a tetramer consisting of 1 alpha chain and 1 beta chain of INSR and 1 alpha chain and 1 beta chain of IGF1R. Interacts with SORBS1 but dissociates from it following insulin stimulation. Binds SH2B2. Activated form of INSR interacts (via Tyr-1000) with the PTB/PID domains of IRS1 and SHC1. The sequences surrounding the phosphorylated NPXY motif contribute differentially to either IRS1 or SHC1 recognition. Interacts (via tyrosines in the C-terminus) with IRS2 (via PTB domain and 591-786 AA); the 591-786 would be the primary anchor of IRS2 to INSR while the PTB domain would have a stabilizing action on the interaction with INSR. Interacts with the SH2 domains of the 85 kDa regulatory subunit of PI3K (PIK3R1) in vitro, when autophosphorylated on tyrosine residues. Interacts with SOCS7. Interacts (via the phosphorylated Tyr-1000), with SOCS3. Interacts (via the phosphorylated Tyr-1186, Tyr-1190, Tyr-1191) with SOCS1. Interacts with ARRB2. Interacts with GRB10; this interaction blocks the association between IRS1/IRS2 and INSR, significantly reduces insulin-stimulated tyrosine phosphorylation of IRS1 and IRS2 and thus decreases insulin signaling. Interacts with PDPK1. Interacts (via Tyr-1191) with GRB14 (via BPS domain); this interaction protects the tyrosines in the activation loop from dephosphorylation, but promotes dephosphorylation of Tyr-1000, this results in decreased interaction with, and phosphorylation of, IRS1. Interacts (via subunit alpha) with ENPP1 (via 485-599 AA); this interaction blocks autophosphorylation. Interacts with PTPRE; this interaction is dependent of Tyr-1186, Tyr-1190 and Tyr-1191 of the INSR. Interacts with STAT5B (via SH2 domain). Interacts with PTPRF. Interacts with GRB7. Interacts with CAV2 (tyrosine-phosphorylated form); the interaction is increased with 'Tyr-27'phosphorylation of CAV2. Interacts with ATIC; ATIC together with PRKAA2/AMPK2 and HACD3/PTPLAD1 is proposed to be part of a signaling netwok regulating INSR autophosphorylation and endocytosis. Interacts with the insulin receptor SORL1; this interaction strongly increases its surface exposure, hence strengthens insulin signal reception. Interacts (tyrosine phosphorylated) with CCDC88A/GIV (via SH2-like region); binding requires autophosphorylation of the Insr C-terminal region. Interacts with GNAI3; the interaction is probably mediated by CCDC88A/GIV. Interacts with LMBRD1. Interacts (in response to insulin stimulation) with NCK1; this interaction may recruit PTPN1 to mediate INSR dephosphorylation. Interacts with CD248; this interaction diminishes INSR autophosphorylation. After being transported from the endoplasmic reticulum to the Golgi apparatus, the single glycosylated precursor is further glycosylated and then cleaved, followed by its transport to the plasma membrane. In terms of processing, autophosphorylated on tyrosine residues in response to insulin. Phosphorylation of Tyr-1000 is required for binding to IRS1, SHC1 and STAT5B. May also be phosphorylated at Tyr-1186 and Tyr-1191 by mTORC2. Dephosphorylated by PTPRE at Tyr-1000, Tyr-1186, Tyr-1190 and Tyr-1191. Dephosphorylated by PTPRF and PTPN1. Dephosphorylated by PTPN2; down-regulates insulin-induced signaling. Post-translationally, S-nitrosylation at Cys-1084 by BLVRB inhibits the receptor tyrosine kinase, thereby inhibiting insulin signaling. Ubiquitinated by MARCHF1; leading to degradation thereby reducing surface INSR expression.

The protein localises to the cell membrane. It is found in the late endosome. Its subcellular location is the lysosome. The catalysed reaction is L-tyrosyl-[protein] + ATP = O-phospho-L-tyrosyl-[protein] + ADP + H(+). Its activity is regulated as follows. Activated in response to insulin. Autophosphorylation activates the kinase activity. PTPN1, PTPRE and PTPRF dephosphorylate important tyrosine residues, thereby reducing INSR activity. Inhibited by ENPP1. GRB10 and GRB14 inhibit the catalytic activity of the INSR, they block access of substrates to the activated receptor. SOCS1 and SOCS3 act as negative regulators of INSR activity, they bind to the activated INRS and interfere with the phosphorylation of INSR substrates. Functionally, receptor tyrosine kinase which mediates the pleiotropic actions of insulin. Binding of insulin leads to phosphorylation of several intracellular substrates, including, insulin receptor substrates (IRS1, 2, 3, 4), SHC, GAB1, CBL and other signaling intermediates. Each of these phosphorylated proteins serve as docking proteins for other signaling proteins that contain Src-homology-2 domains (SH2 domain) that specifically recognize different phosphotyrosine residues, including the p85 regulatory subunit of PI3K and SHP2. Phosphorylation of IRSs proteins lead to the activation of two main signaling pathways: the PI3K-AKT/PKB pathway, which is responsible for most of the metabolic actions of insulin, and the Ras-MAPK pathway, which regulates expression of some genes and cooperates with the PI3K pathway to control cell growth and differentiation. Binding of the SH2 domains of PI3K to phosphotyrosines on IRS1 leads to the activation of PI3K and the generation of phosphatidylinositol-(3, 4, 5)-triphosphate (PIP3), a lipid second messenger, which activates several PIP3-dependent serine/threonine kinases, such as PDPK1 and subsequently AKT/PKB. The net effect of this pathway is to produce a translocation of the glucose transporter SLC2A4/GLUT4 from cytoplasmic vesicles to the cell membrane to facilitate glucose transport. Moreover, upon insulin stimulation, activated AKT/PKB is responsible for: anti-apoptotic effect of insulin by inducing phosphorylation of BAD; regulates the expression of gluconeogenic and lipogenic enzymes by controlling the activity of the winged helix or forkhead (FOX) class of transcription factors. Another pathway regulated by PI3K-AKT/PKB activation is mTORC1 signaling pathway which regulates cell growth and metabolism and integrates signals from insulin. AKT mediates insulin-stimulated protein synthesis by phosphorylating TSC2 thereby activating mTORC1 pathway. The Ras/RAF/MAP2K/MAPK pathway is mainly involved in mediating cell growth, survival and cellular differentiation of insulin. Phosphorylated IRS1 recruits GRB2/SOS complex, which triggers the activation of the Ras/RAF/MAP2K/MAPK pathway. In addition to binding insulin, the insulin receptor can bind insulin-like growth factors (IGFI and IGFII). When present in a hybrid receptor with IGF1R, binds IGF1. In adipocytes, inhibits lipolysis. The sequence is that of Insulin receptor (Insr) from Rattus norvegicus (Rat).